The chain runs to 388 residues: WD repeat-containing protein 55 (388 aa).

The segment covering 1-20 (MDPTCEESPAEDSNNEEEDL) has biased composition (acidic residues). The segment at 1–33 (MDPTCEESPAEDSNNEEEDLDSTKAAPRIRDTP) is disordered. WD repeat units lie at residues 37–76 (VLEA…GETK), 83–122 (HHLK…LERR), 126–164 (AHSA…PLMD), 167–206 (QHEE…FELL), 209–248 (PQSG…ATSD), 251–290 (ALRA…VVGT), and 293–333 (QHAG…TVVV). S355 carries the post-translational modification Phosphoserine. The interval 364-388 (REDEEDAKAPEEVVRESDDDDDDSD) is disordered. Over residues 370–379 (AKAPEEVVRE) the composition is skewed to basic and acidic residues.

This sequence belongs to the WD repeat WDR55 family.

It is found in the nucleus. Its subcellular location is the nucleolus. The protein localises to the cytoplasm. In terms of biological role, nucleolar protein that acts as a modulator of rRNA synthesis. Plays a central role during organogenesis. The sequence is that of WD repeat-containing protein 55 (Wdr55) from Mus musculus (Mouse).